The following is a 612-amino-acid chain: Cytokine-like nuclear factor N-PAC (612 aa).

Residues 22–81 form the PWWP domain; that stretch reads PKDLIWAKMKGFTPWPGMIVEPPLDLLTQQRRANTKCVFFFGSRNFAWIEENNIKPFEGP. A disordered region spans residues 168–270; it reads AVEGENNADS…GASSSSPTAR (103 aa). Low complexity-rich tracts occupy residues 177-193 and 201-220; these read SSAS…TAKS and AKPV…TTKS. The span at 228 to 240 shows a compositional bias: polar residues; sequence AHQTPTGANTSGL. Positions 276–279 are interaction with histone H3; that stretch reads DDLL. Positions 319 to 612 are dehydrogenase domain; the sequence is RDIVPSELTF…SSAVFVRSRF (294 aa). NAD(+)-binding positions include 329-343, Thr421, and Arg564; that span reads GFLG…IVKD.

It belongs to the HIBADH-related family. NP60 subfamily. Binds to mononucleosomes. Interacts with male-specific lethal (MSL) histone acetyltransferase complex at least composed of mof, msl-1, msl-2 and msl-3.

The protein resides in the chromosome. Nucleosome-destabilizing factor that is recruited to genes during transcriptional activation and colocalizes with a subset of trimethylated 'Lys-36' histone H3 (H3K36me3)-enriched regions. Binds DNA (in vitro). Facilitates Pol II transcription through nucleosomes. Facilitates male-specific lethal (MSL) histone acetyltransferase complex targeting to active genes on the X chromosome. Stimulates the acetylation of 'Lys-56' of nucleosomal histone H3 (H3K56ac) by nej. The sequence is that of Cytokine-like nuclear factor N-PAC from Drosophila pseudoobscura pseudoobscura (Fruit fly).